The chain runs to 797 residues: Ent-atiserene synthase KSL1, chloroplastic (797 aa).

The transit peptide at 1–48 directs the protein to the chloroplast; it reads LVKDDMSLILSSFSLFRSSRSSPASASLAGSGHPRTTPPKIASLQSPM. Positions 21-32 are enriched in low complexity; the sequence is SSPASASLAGSG. A disordered region spans residues 21 to 47; it reads SSPASASLAGSGHPRTTPPKIASLQSP. Aspartate 547, aspartate 551, asparagine 691, and glutamate 699 together coordinate Mg(2+). Residues 547 to 551 carry the DDXXD motif motif; sequence DDLFD.

Belongs to the terpene synthase family. Requires Mg(2+) as cofactor.

It localises to the plastid. The protein localises to the chloroplast. The catalysed reaction is ent-copalyl diphosphate = ent-atiserene + diphosphate. It functions in the pathway secondary metabolite biosynthesis; terpenoid biosynthesis. Involved in the biosynthesis of ent-kaurene diterpenoids natural products such as oridonin, miltiradiene, eriocalyxin B and nezukol, known to exhibit antitumor, anti-inflammatory and antibacterial activities. Catalyzes the conversion of ent-copalyl diphosphate (ent-CPP) to ent-atiserene. The protein is Ent-atiserene synthase KSL1, chloroplastic of Isodon japonicus (Scutellaria japonica).